The primary structure comprises 480 residues: Glutarate-semialdehyde dehydrogenase (480 aa).

Residues 156–157 (WN), 180–183 (KPAS), and 233–234 (GS) each bind NADP(+). The active-site Proton acceptor is Glu-255. An NADP(+)-binding site is contributed by Leu-256. Cys-289 acts as the Nucleophile in catalysis. Glu-384 is an NADP(+) binding site.

This sequence belongs to the aldehyde dehydrogenase family.

It carries out the reaction 5-oxopentanoate + NADP(+) + H2O = glutarate + NADPH + 2 H(+). It functions in the pathway amino-acid degradation. Its function is as follows. Catalyzes the conversion of 5-oxopentanoate (glutarate semialdehyde) to glutarate. Involved in L-lysine degradation. The protein is Glutarate-semialdehyde dehydrogenase of Pseudomonas putida (strain ATCC 47054 / DSM 6125 / CFBP 8728 / NCIMB 11950 / KT2440).